Here is a 268-residue protein sequence, read N- to C-terminus: Nickel import ATP-binding protein NikE (268 aa).

The 249-residue stretch at 4–252 (LNVSDLSHHY…SSDAGRVLQN (249 aa)) folds into the ABC transporter domain. Position 45 to 52 (45 to 52 (GRSGCGKS)) interacts with ATP.

Belongs to the ABC transporter superfamily. Nickel importer (TC 3.A.1.5.3) family. The complex is composed of two ATP-binding proteins (NikD and NikE), two transmembrane proteins (NikB and NikC) and a solute-binding protein (NikA).

It is found in the cell inner membrane. The catalysed reaction is Ni(2+)(out) + ATP + H2O = Ni(2+)(in) + ADP + phosphate + H(+). Functionally, part of the ABC transporter complex NikABCDE involved in nickel import. Responsible for energy coupling to the transport system. This is Nickel import ATP-binding protein NikE from Escherichia coli O157:H7.